A 299-amino-acid polypeptide reads, in one-letter code: Ribonuclease 3-like protein 3 (299 aa).

The region spanning 39 to 183 (VAAVESLLGY…LIGAIYCDSN (145 aa)) is the RNase III domain. Mg(2+) is bound by residues E79, D169, and E172. The DRBM domain maps to 209–273 (HPVSELFEFC…AKAALDKLKE (65 aa)). The segment at 274–299 (TLGQSQTEPMSAEVSEQFNKIDLTGS) is disordered. Polar residues predominate over residues 275–291 (LGQSQTEPMSAEVSEQF).

Mg(2+) is required as a cofactor. The cofactor is Mn(2+).

Cleaves double-stranded RNA (dsRNA). The chain is Ribonuclease 3-like protein 3 from Oryza sativa subsp. japonica (Rice).